A 373-amino-acid polypeptide reads, in one-letter code: NADPH-dependent 3-keto-steroid reductase Hsd3b5 (373 aa).

NADP(+)-binding positions include 10–15 (GAGGFL), tyrosine 155, and lysine 159. Residue lysine 159 is the Proton donor of the active site. A helical membrane pass occupies residues 288–308 (LPLLYWLAFLLETVSFLLRPF). Lysine 350 bears the N6-acetyllysine mark.

It belongs to the 3-beta-HSD family. Expressed predominantly in male liver.

The protein resides in the endoplasmic reticulum membrane. Its subcellular location is the mitochondrion membrane. The catalysed reaction is a 3beta-hydroxysteroid + NADP(+) = a 3-oxosteroid + NADPH + H(+). It carries out the reaction 5alpha-androstane-3beta,17beta-diol + NADP(+) = 17beta-hydroxy-5alpha-androstan-3-one + NADPH + H(+). It catalyses the reaction 3beta-hydroxy-5alpha-androstan-17-one + NADP(+) = 5alpha-androstan-3,17-dione + NADPH + H(+). The protein operates within steroid metabolism. Its function is as follows. Responsible for the reduction of the oxo group on the C-3 of 5alpha-androstane steroids. Catalyzes the conversion of dihydrotestosterone to its inactive form 5alpha-androstanediol, that does not bind androgen receptor/AR. Also converts androstanedione, a precursor of testosterone and estrone, to epiandrosterone. Does not function as an isomerase. The protein is NADPH-dependent 3-keto-steroid reductase Hsd3b5 of Rattus norvegicus (Rat).